Consider the following 901-residue polypeptide: Protein translocase subunit SecA (901 aa).

ATP-binding positions include Gln85, 103-107 (GEGKT), and Asp510. The tract at residues 847–901 (TRINQNNLPVDENSQTTQNSETEDYSDRRIGRNEPCPCGSGKKYKHCHGSRVARQ) is disordered. Positions 848–866 (RINQNNLPVDENSQTTQNS) are enriched in polar residues. Zn(2+) contacts are provided by Cys882, Cys884, Cys893, and His894. The span at 888–901 (KKYKHCHGSRVARQ) shows a compositional bias: basic residues.

This sequence belongs to the SecA family. In terms of assembly, monomer and homodimer. Part of the essential Sec protein translocation apparatus which comprises SecA, SecYEG and auxiliary proteins SecDF-YajC and YidC. The cofactor is Zn(2+).

It localises to the cell inner membrane. The protein localises to the cytoplasm. The enzyme catalyses ATP + H2O + cellular proteinSide 1 = ADP + phosphate + cellular proteinSide 2.. In terms of biological role, part of the Sec protein translocase complex. Interacts with the SecYEG preprotein conducting channel. Has a central role in coupling the hydrolysis of ATP to the transfer of proteins into and across the cell membrane, serving both as a receptor for the preprotein-SecB complex and as an ATP-driven molecular motor driving the stepwise translocation of polypeptide chains across the membrane. In Haemophilus influenzae (strain PittGG), this protein is Protein translocase subunit SecA.